The following is a 2563-amino-acid chain: Highly reducing polyketide synthase 2 (2563 aa).

In terms of domain architecture, Ketosynthase family 3 (KS3) spans 11–451 (MSDIAIVGYS…GSNSHIVLDD (441 aa)). Active-site for beta-ketoacyl synthase activity residues include cysteine 182, histidine 317, and histidine 357. In terms of domain architecture, Malonyl-CoA:ACP transacylase (MAT) spans 589–890 (FAFTGQGAQY…DTLSEMSSAS (302 aa)). The interval 970–1101 (GELLGVRVSD…ANISVEFQDN (132 aa)) is N-terminal hotdog fold. A PKS/mFAS DH domain is found at 970 to 1269 (GELLGVRVSD…TSAVSGGITH (300 aa)). The active-site Proton acceptor; for dehydratase activity is the histidine 1002. Residues 1126–1269 (TLPIDPRVFY…TSAVSGGITH (144 aa)) are C-terminal hotdog fold. Catalysis depends on aspartate 1186, which acts as the Proton donor; for dehydratase activity. The methyltransferase (CMet) domain stretch occupies residues 1296–1618 (FAANAVPKDD…FSGNDLVIRD (323 aa)). Residues 1858 to 2168 (GSLDSLQFVE…QEDTSERVIV (311 aa)) form the Enoyl reductase (ER) domain. The Ketoreductase (KR) domain occupies 2192–2370 (STYLVAGGSG…ALSLDIGWMS (179 aa)). In terms of domain architecture, Carrier spans 2480–2561 (SDARERQQVV…GVAEVVEARS (82 aa)). Serine 2521 is modified (O-(pantetheine 4'-phosphoryl)serine).

The cofactor is pantetheine 4'-phosphate.

It functions in the pathway secondary metabolite biosynthesis. In terms of biological role, highly reducing polyketide synthase; part of the gene cluster that mediates the biosynthesis of the tetraketides fugralins such as linear fugralin A and cyclic fugralin B, volatile compounds that play a role in the asexual reproductive cycle but are not involved in pathogenicity. One of the key features of fugralins is the presence of a double methyl group, which is only rarely encountered in fungal secondary metabolites. As the fugralins cluster does not contain an independent methyltransferase, the PKS FGR1 is probably responsible for adding two methyl groups to the same carbon atom. Fugralin B is similar to fugralin A except for a cyclization between the carboxylic acid C-8 and the alcohol on C-4 resulting in a six membered lactone ring, probably catalyzed by the cyclase FGR4. The exact role of the individual cluster genes remains unknown and further work is needed to unravel the biosynthetic pathway. This Gibberella zeae (strain ATCC MYA-4620 / CBS 123657 / FGSC 9075 / NRRL 31084 / PH-1) (Wheat head blight fungus) protein is Highly reducing polyketide synthase 2.